The primary structure comprises 417 residues: Tol-Pal system protein TolB (417 aa).

A signal peptide spans 1 to 16 (MRYLWLFLIGTIGLFA).

It belongs to the TolB family. As to quaternary structure, the Tol-Pal system is composed of five core proteins: the inner membrane proteins TolA, TolQ and TolR, the periplasmic protein TolB and the outer membrane protein Pal. They form a network linking the inner and outer membranes and the peptidoglycan layer.

It is found in the periplasm. Its function is as follows. Part of the Tol-Pal system, which plays a role in outer membrane invagination during cell division and is important for maintaining outer membrane integrity. The sequence is that of Tol-Pal system protein TolB from Helicobacter pylori (strain HPAG1).